A 152-amino-acid polypeptide reads, in one-letter code: Protein-export protein SecB (152 aa).

This sequence belongs to the SecB family. In terms of assembly, homotetramer, a dimer of dimers. One homotetramer interacts with 1 SecA dimer.

Its subcellular location is the cytoplasm. In terms of biological role, one of the proteins required for the normal export of preproteins out of the cell cytoplasm. It is a molecular chaperone that binds to a subset of precursor proteins, maintaining them in a translocation-competent state. It also specifically binds to its receptor SecA. This chain is Protein-export protein SecB, found in Rickettsia akari (strain Hartford).